The following is a 771-amino-acid chain: MAFDWFWKAMGSSPKKNQKKSRAVVAQADSSRYSGLSDAELRDAASDVVTEQSTSEDGHHFGGQVDDAPALLAILREAASRTLNMEPFDVQMQGTYRLLHGDVVEMATGEGKTLAGAMAAVGFALQGKRVHVITVNSYLAGRDNDWMGPMFDFFGLTHGAIREDLTADQRRDIYSRDVIFGAINELGFDVLRDQLITRRADQVRTPADVAVIDEADSVMVDEALVPLVLAGSEPGPAPAGRITDLVKRMEEDKHFHVSEDHRNVFLTDEGAAFVEKELGVDSLYEDEGELLVQVNVALHAEHLLIRDVHYIVRDGKVALIDGSRGRVAELQRWPDGLQAAVEAKEGLDVTDGGRILDQITIQALVGMYPEVCGMTGTALAAGDQLRQFYNLQVSVIEPNVPNIRFDEADRVYVSAAERNDAVVKHIVEVQKTGQPQLVGTQDVAESEELAEALLSAGVECSVLNAKNHEAEAAVVAEAGRPGRVTVSTQMAGRGTDIKLGGTDEAEHDEVVETGGLHVVGVGRFRSQRLDNQLRGRAGRQGDPGSSLFFVSLEDDVVAVGGAGEELQAQPEEDGLLPQKKVQQFVDHCQRVTEGQMLDIHATTWKYNKLIKDQRDIVNDRRDTLLDTAAAWDDLSYHNVDRAAELKKQGISEEVLEQAAREIMLFHLDNEWSEHLAYLDDVRESIHLRAIARESPIDEFHRMSIAAFGELAERAVNKARETFDEVEITSDGAQLGEMGLHKPSATWTYMVNDNPLSSSGGSVMGSIVQMFR.

Residues Q91, 109–113 (GEGKT), and D496 each bind ATP.

The protein belongs to the SecA family. In terms of assembly, monomer and homodimer. Part of the essential Sec protein translocation apparatus which comprises SecA, SecYEG and auxiliary proteins SecDF. Other proteins may also be involved.

It localises to the cell membrane. The protein resides in the cytoplasm. It catalyses the reaction ATP + H2O + cellular proteinSide 1 = ADP + phosphate + cellular proteinSide 2.. Part of the Sec protein translocase complex. Interacts with the SecYEG preprotein conducting channel. Has a central role in coupling the hydrolysis of ATP to the transfer of proteins into and across the cell membrane, serving as an ATP-driven molecular motor driving the stepwise translocation of polypeptide chains across the membrane. This is Protein translocase subunit SecA 2 from Corynebacterium jeikeium (strain K411).